The chain runs to 335 residues: Nucleoid-associated protein YejK (335 aa).

This sequence belongs to the YejK family.

The protein resides in the cytoplasm. It localises to the nucleoid. The chain is Nucleoid-associated protein YejK from Shigella flexneri.